The sequence spans 342 residues: Nicotinate-nucleotide--dimethylbenzimidazole phosphoribosyltransferase (342 aa).

Residue Glu311 is the Proton acceptor of the active site.

The protein belongs to the CobT family.

It catalyses the reaction 5,6-dimethylbenzimidazole + nicotinate beta-D-ribonucleotide = alpha-ribazole 5'-phosphate + nicotinate + H(+). The protein operates within nucleoside biosynthesis; alpha-ribazole biosynthesis; alpha-ribazole from 5,6-dimethylbenzimidazole: step 1/2. Functionally, catalyzes the synthesis of alpha-ribazole-5'-phosphate from nicotinate mononucleotide (NAMN) and 5,6-dimethylbenzimidazole (DMB). The chain is Nicotinate-nucleotide--dimethylbenzimidazole phosphoribosyltransferase from Photobacterium profundum (strain SS9).